The chain runs to 136 residues: Large ribosomal subunit protein eL27 (136 aa).

The protein belongs to the eukaryotic ribosomal protein eL27 family.

The protein is Large ribosomal subunit protein eL27 (RPL27) of Candida albicans (Yeast).